The sequence spans 239 residues: Ribosomal RNA small subunit methyltransferase G (239 aa).

Residues G77, F82, 128 to 129 (AE), and R147 each bind S-adenosyl-L-methionine. The interval 215–239 (IRKTKSTPKKYPRKPGTPNKSPIEG) is disordered. The span at 216–227 (RKTKSTPKKYPR) shows a compositional bias: basic residues.

The protein belongs to the methyltransferase superfamily. RNA methyltransferase RsmG family.

Its subcellular location is the cytoplasm. In terms of biological role, specifically methylates the N7 position of guanine in position 535 of 16S rRNA. In Bacillus velezensis (strain DSM 23117 / BGSC 10A6 / LMG 26770 / FZB42) (Bacillus amyloliquefaciens subsp. plantarum), this protein is Ribosomal RNA small subunit methyltransferase G.